The following is a 93-amino-acid chain: UPF0473 protein RBAM_024480 (93 aa).

The protein belongs to the UPF0473 family.

The polypeptide is UPF0473 protein RBAM_024480 (Bacillus velezensis (strain DSM 23117 / BGSC 10A6 / LMG 26770 / FZB42) (Bacillus amyloliquefaciens subsp. plantarum)).